The following is a 253-amino-acid chain: tRNA uridine(34) hydroxylase (253 aa).

Residues 127 to 221 (RGRPLVLLDT…YFEEVGGEGY (95 aa)) form the Rhodanese domain. Cys-181 acts as the Cysteine persulfide intermediate in catalysis.

The protein belongs to the TrhO family.

It catalyses the reaction uridine(34) in tRNA + AH2 + O2 = 5-hydroxyuridine(34) in tRNA + A + H2O. Functionally, catalyzes oxygen-dependent 5-hydroxyuridine (ho5U) modification at position 34 in tRNAs. The chain is tRNA uridine(34) hydroxylase from Xanthomonas oryzae pv. oryzae (strain MAFF 311018).